The primary structure comprises 363 residues: Ribosomal RNA large subunit methyltransferase M (363 aa).

Residues serine 194, 227 to 230, aspartate 246, aspartate 266, and aspartate 284 contribute to the S-adenosyl-L-methionine site; that span reads CPGG. The active-site Proton acceptor is the lysine 313.

This sequence belongs to the class I-like SAM-binding methyltransferase superfamily. RNA methyltransferase RlmE family. RlmM subfamily. As to quaternary structure, monomer.

It is found in the cytoplasm. The enzyme catalyses cytidine(2498) in 23S rRNA + S-adenosyl-L-methionine = 2'-O-methylcytidine(2498) in 23S rRNA + S-adenosyl-L-homocysteine + H(+). Functionally, catalyzes the 2'-O-methylation at nucleotide C2498 in 23S rRNA. The sequence is that of Ribosomal RNA large subunit methyltransferase M from Mannheimia succiniciproducens (strain KCTC 0769BP / MBEL55E).